The sequence spans 194 residues: 7-methyl-GTP pyrophosphatase (194 aa).

D67 serves as the catalytic Proton acceptor.

This sequence belongs to the Maf family. YceF subfamily. A divalent metal cation is required as a cofactor.

It is found in the cytoplasm. The enzyme catalyses N(7)-methyl-GTP + H2O = N(7)-methyl-GMP + diphosphate + H(+). Nucleoside triphosphate pyrophosphatase that hydrolyzes 7-methyl-GTP (m(7)GTP). May have a dual role in cell division arrest and in preventing the incorporation of modified nucleotides into cellular nucleic acids. The chain is 7-methyl-GTP pyrophosphatase from Pseudoalteromonas atlantica (strain T6c / ATCC BAA-1087).